The chain runs to 387 residues: 8-amino-7-oxononanoate synthase (387 aa).

Arg-19 is a substrate binding site. 106-107 serves as a coordination point for pyridoxal 5'-phosphate; it reads GY. Residue His-131 participates in substrate binding. Ser-177, His-205, and Thr-236 together coordinate pyridoxal 5'-phosphate. At Lys-239 the chain carries N6-(pyridoxal phosphate)lysine. Thr-353 provides a ligand contact to substrate.

It belongs to the class-II pyridoxal-phosphate-dependent aminotransferase family. BioF subfamily. As to quaternary structure, homodimer. Pyridoxal 5'-phosphate serves as cofactor.

The catalysed reaction is 6-carboxyhexanoyl-[ACP] + L-alanine + H(+) = (8S)-8-amino-7-oxononanoate + holo-[ACP] + CO2. It participates in cofactor biosynthesis; biotin biosynthesis. Catalyzes the decarboxylative condensation of pimeloyl-[acyl-carrier protein] and L-alanine to produce 8-amino-7-oxononanoate (AON), [acyl-carrier protein], and carbon dioxide. In Nitrosomonas eutropha (strain DSM 101675 / C91 / Nm57), this protein is 8-amino-7-oxononanoate synthase.